A 278-amino-acid chain; its full sequence is Phosphonates import ATP-binding protein PhnC 2 (278 aa).

Residues Ile-5–Gly-253 form the ABC transporter domain. An ATP-binding site is contributed by Gly-37 to Ser-44.

Belongs to the ABC transporter superfamily. Phosphonates importer (TC 3.A.1.9.1) family. As to quaternary structure, the complex is composed of two ATP-binding proteins (PhnC), two transmembrane proteins (PhnE) and a solute-binding protein (PhnD).

Its subcellular location is the cell inner membrane. The enzyme catalyses phosphonate(out) + ATP + H2O = phosphonate(in) + ADP + phosphate + H(+). Functionally, part of the ABC transporter complex PhnCDE involved in phosphonates import. Responsible for energy coupling to the transport system. In Pseudomonas aeruginosa (strain ATCC 15692 / DSM 22644 / CIP 104116 / JCM 14847 / LMG 12228 / 1C / PRS 101 / PAO1), this protein is Phosphonates import ATP-binding protein PhnC 2.